A 322-amino-acid polypeptide reads, in one-letter code: Ribonucleoside-diphosphate reductase small subunit (322 aa).

Fe cation contacts are provided by Asp70, Glu101, and His104. Tyr108 is a catalytic residue. Fe cation is bound by residues Glu163, Glu197, and His200.

This sequence belongs to the ribonucleoside diphosphate reductase small chain family. As to quaternary structure, heterodimer of a large and a small subunit. It depends on Fe cation as a cofactor.

It catalyses the reaction a 2'-deoxyribonucleoside 5'-diphosphate + [thioredoxin]-disulfide + H2O = a ribonucleoside 5'-diphosphate + [thioredoxin]-dithiol. Functionally, provides the precursors necessary for DNA synthesis. Catalyzes the biosynthesis of deoxyribonucleotides from the corresponding ribonucleotides. The chain is Ribonucleoside-diphosphate reductase small subunit (RNR2) from Plasmodium falciparum (isolate FCR-3 / Gambia).